A 79-amino-acid chain; its full sequence is Putative defensin-like protein 309 (79 aa).

The signal sequence occupies residues 1–19 (MKILAFFIFVLLIFSCSSS). Disulfide bonds link C31–C50, C37–C55, and C41–C57.

The protein belongs to the DEFL family.

The protein resides in the secreted. The polypeptide is Putative defensin-like protein 309 (Arabidopsis thaliana (Mouse-ear cress)).